The following is a 354-amino-acid chain: Guanine nucleotide-binding protein alpha-2 subunit (354 aa).

Residues 33 to 354 (KIYKVLLLGA…QHSLKEAGMF (322 aa)) form the G-alpha domain. Positions 36 to 49 (KVLLLGASDSGKST) are G1 motif. The GTP site is built by Asp44, Ser45, Gly46, Lys47, Ser48, Thr49, Asp148, Leu173, Thr179, Gly201, Asn269, Lys270, Asp272, and Ala326. Ser48 contacts Mg(2+). Residues 171-179 (DILRSRNST) form a G2 motif region. Mg(2+) is bound at residue Thr179. Residues 194 to 203 (IRMFDVGGQR) form a G3 motif region. A G4 motif region spans residues 265–272 (ILFLNKFD). The interval 324–329 (TTAVDT) is G5 motif.

Belongs to the G-alpha family. In terms of assembly, g proteins are composed of 3 units; alpha, beta and gamma. Binding of the beta-gamma subunit complex (git5-git11) to the alpha subunit (gpa2) facilitates interaction with GPCR git3. Interacts with GPCR git3; the interaction is direct and leads to activation of gpa2 upon glucose stimulation. Interacts with adenylate cyclase cyr1 (via N-terminus); the interaction is direct and serves to activate adenylate cyclase and cAMP-PKA signaling, to repress sexual development and gluconeogenesis. The cofactor is Mg(2+).

The protein localises to the cell membrane. In terms of biological role, alpha subunit of the heterotrimeric guanine nucleotide-binding protein (G protein) involved in glucose-induced cAMP signaling. Binds to its cognate transmembrane receptor git3, which senses extracellular glucose, and activates cAMP-PKA signaling to repress sexual development and gluconeogenesis. The polypeptide is Guanine nucleotide-binding protein alpha-2 subunit (Schizosaccharomyces pombe (strain 972 / ATCC 24843) (Fission yeast)).